Here is a 262-residue protein sequence, read N- to C-terminus: 5'-nucleotidase SurE (262 aa).

Asp11, Asp12, Ser43, and Asn101 together coordinate a divalent metal cation. Residues 220-229 (SAGDGPKEWP) are compositionally biased toward basic and acidic residues. Residues 220-246 (SAGDGPKEWPSDVSQIETNSPSLTPIQ) are disordered. Polar residues predominate over residues 231–244 (DVSQIETNSPSLTP).

It belongs to the SurE nucleotidase family. Requires a divalent metal cation as cofactor.

The protein localises to the cytoplasm. The enzyme catalyses a ribonucleoside 5'-phosphate + H2O = a ribonucleoside + phosphate. Functionally, nucleotidase that shows phosphatase activity on nucleoside 5'-monophosphates. This Prochlorococcus marinus (strain SARG / CCMP1375 / SS120) protein is 5'-nucleotidase SurE.